Consider the following 97-residue polypeptide: Serine protease inhibitor Kazal-type 13 (97 aa).

The signal sequence occupies residues 1 to 26; it reads MTRRGCWPHRIIFSLILLTWTHVTLA. The region spanning 36–97 is the Kazal-like domain; the sequence is NWPKPPCKMY…IEFVKYGKCE (62 aa). 3 disulfides stabilise this stretch: Cys42–Cys78, Cys56–Cys75, and Cys64–Cys96.

As to expression, restricted to the epididymis, with highest levels in the initial segment, including epithelial cells, lumen, and sperm (at protein level). Localizes to the sperm heads, where it is restricted to the acrosomal region in epididymal spermatozoa, but not in testicular spermatozoa (at protein level).

The protein resides in the secreted. Functionally, may be a serine protease inhibitor. Essential for sperm maturation and fertility. Inhibits sperm acrosome reaction, protecting sperm from premature reaction. In Rattus norvegicus (Rat), this protein is Serine protease inhibitor Kazal-type 13 (Spink13).